Consider the following 53-residue polypeptide: 20 kDa chaperonin (53 aa).

Cpn-10 domain regions lie at residues 1–10 (YTSIKPLGDR) and 11–53 (VAEA…KITP).

Belongs to the GroES chaperonin family. As to quaternary structure, forms stable complexes with cpn60 in the presence of ATP. Homotetramer.

The protein resides in the plastid. It is found in the chloroplast. In terms of biological role, seems to function only as a co-chaperone, along with cpn60, and in certain cases is essential for the discharge of biologically active proteins from cpn60. The chain is 20 kDa chaperonin from Populus euphratica (Euphrates poplar).